The sequence spans 656 residues: Chaperone protein DnaK (656 aa).

Disordered stretches follow at residues 488 to 532 (EMQE…DAVD) and 579 to 656 (YQQQ…DEDE). Residues 492 to 513 (EAEKHAEEDEKRRERIEARNEA) show a composition bias toward basic and acidic residues. The span at 523-532 (LLDENEDAVD) shows a compositional bias: acidic residues. Over residues 584-635 (GEGGAGAGAGAAGGMGGAGPGGMGGAGPGGMGGAGPGGMGGAGPGAGAGQQG) the composition is skewed to gly residues. Over residues 636–656 (DGEEFVDADFEDVDDEDDEDE) the composition is skewed to acidic residues.

This sequence belongs to the heat shock protein 70 family.

In terms of biological role, acts as a chaperone. The sequence is that of Chaperone protein DnaK from Natronomonas pharaonis (strain ATCC 35678 / DSM 2160 / CIP 103997 / JCM 8858 / NBRC 14720 / NCIMB 2260 / Gabara) (Halobacterium pharaonis).